A 377-amino-acid polypeptide reads, in one-letter code: Probable transposase for insertion sequence element IS5377 (377 aa).

Belongs to the transposase 11 family.

The protein is Probable transposase for insertion sequence element IS5377 of Geobacillus stearothermophilus (Bacillus stearothermophilus).